A 1120-amino-acid polypeptide reads, in one-letter code: Transcription-repair-coupling factor (1120 aa).

Residues 591-756 form the Helicase ATP-binding domain; sequence DLSNGMLMDR…MTGLKELSII (166 aa). ATP is bound at residue 604 to 611; that stretch reads GDVGFGKT. A DEEQ box motif is present at residues 709–712; the sequence is DEEQ. The Helicase C-terminal domain occupies 777–931; the sequence is IIRDALLHEH…GFTIASHDMD (155 aa).

This sequence in the N-terminal section; belongs to the UvrB family. The protein in the C-terminal section; belongs to the helicase family. RecG subfamily.

It localises to the cytoplasm. Functionally, couples transcription and DNA repair by recognizing RNA polymerase (RNAP) stalled at DNA lesions. Mediates ATP-dependent release of RNAP and its truncated transcript from the DNA, and recruitment of nucleotide excision repair machinery to the damaged site. The protein is Transcription-repair-coupling factor of Rickettsia bellii (strain RML369-C).